The chain runs to 127 residues: MAKTSTKKRVKRVVSDGIAHIHASFNNTIVTITDRQGNTLAWATSGGSGFRGSRKSTPFAAQVAAEKAGRIVQEMGMKNLEVRVKGPGPGRESAARSLNNVGFKVTNIADITPIPHNGCRPPKKRRV.

This sequence belongs to the universal ribosomal protein uS11 family. Part of the 30S ribosomal subunit. Interacts with proteins S7 and S18. Binds to IF-3.

Located on the platform of the 30S subunit, it bridges several disparate RNA helices of the 16S rRNA. Forms part of the Shine-Dalgarno cleft in the 70S ribosome. The sequence is that of Small ribosomal subunit protein uS11 from Nitrosococcus oceani (strain ATCC 19707 / BCRC 17464 / JCM 30415 / NCIMB 11848 / C-107).